The primary structure comprises 289 residues: RNA-binding protein CP29B, chloroplastic (289 aa).

Residues 1–62 (MAASASSLAL…NSPASRFARN (62 aa)) constitute a chloroplast transit peptide. 2 positions are modified to phosphoserine: Ser-6 and Ser-12. Val-63 is subject to N-acetylvaline. The RRM 1 domain occupies 91–169 (LKLFVGNLPF…RPLRVNAGPP (79 aa)). Residues 158 to 199 (DGRPLRVNAGPPPPKREDGFSRGPRSSFGSSGSGYGGGGGSG) form a disordered region. Residues 170-203 (PPKREDGFSRGPRSSFGSSGSGYGGGGGSGAGSG) form a linker (Gly-rich) region. The segment covering 178 to 187 (SRGPRSSFGS) has biased composition (low complexity). A compositionally biased stretch (gly residues) spans 188–199 (SGSGYGGGGGSG). In terms of domain architecture, RRM 2 spans 204 to 282 (NRVYVGNLSW…RQIRVSEAEA (79 aa)).

ADP-ribosylated by the Pseudomonas syringae type III effector HopU1. ADP-ribosylation reduces the ability of the protein to bind RNA. Post-translationally, phosphorylated on tyrosine residues after treatment with abscisic acid (ABA). Phosphorylation may reduce the ability of the protein to bind RNA.

It localises to the plastid. The protein resides in the chloroplast. Its function is as follows. Could be involved in splicing and/or processing of chloroplast RNA's. In Arabidopsis thaliana (Mouse-ear cress), this protein is RNA-binding protein CP29B, chloroplastic.